The chain runs to 250 residues: Glutamate racemase (250 aa).

Residues 7–8 (DS) and 39–40 (YG) each bind substrate. The active-site Proton donor/acceptor is the C70. Residue 71-72 (NT) coordinates substrate. The active-site Proton donor/acceptor is C180. 181–182 (TH) contacts substrate.

The protein belongs to the aspartate/glutamate racemases family.

The enzyme catalyses L-glutamate = D-glutamate. Its pathway is cell wall biogenesis; peptidoglycan biosynthesis. In terms of biological role, provides the (R)-glutamate required for cell wall biosynthesis. The protein is Glutamate racemase of Campylobacter jejuni subsp. jejuni serotype O:2 (strain ATCC 700819 / NCTC 11168).